Consider the following 313-residue polypeptide: Ribosomal RNA small subunit methyltransferase H (313 aa).

S-adenosyl-L-methionine-binding positions include 35-37 (GGH), aspartate 55, phenylalanine 79, aspartate 101, and glutamine 108.

The protein belongs to the methyltransferase superfamily. RsmH family.

It localises to the cytoplasm. It catalyses the reaction cytidine(1402) in 16S rRNA + S-adenosyl-L-methionine = N(4)-methylcytidine(1402) in 16S rRNA + S-adenosyl-L-homocysteine + H(+). Its function is as follows. Specifically methylates the N4 position of cytidine in position 1402 (C1402) of 16S rRNA. In Escherichia coli O7:K1 (strain IAI39 / ExPEC), this protein is Ribosomal RNA small subunit methyltransferase H.